A 502-amino-acid chain; its full sequence is Glutamate--tRNA ligase (502 aa).

Positions 12 to 22 (PSPTGYLHVGG) match the 'HIGH' region motif. Residues 259–263 (KLSKR) carry the 'KMSKS' region motif. Lys262 is an ATP binding site.

This sequence belongs to the class-I aminoacyl-tRNA synthetase family. Glutamate--tRNA ligase type 1 subfamily. Monomer.

It localises to the cytoplasm. It catalyses the reaction tRNA(Glu) + L-glutamate + ATP = L-glutamyl-tRNA(Glu) + AMP + diphosphate. In terms of biological role, catalyzes the attachment of glutamate to tRNA(Glu) in a two-step reaction: glutamate is first activated by ATP to form Glu-AMP and then transferred to the acceptor end of tRNA(Glu). The protein is Glutamate--tRNA ligase of Chlorobium chlorochromatii (strain CaD3).